We begin with the raw amino-acid sequence, 359 residues long: Uroporphyrinogen decarboxylase (359 aa).

Residues R28, A30, R32, D79, Y157, S212, and H335 each coordinate coproporphyrinogen III.

The protein belongs to the uroporphyrinogen decarboxylase family. As to quaternary structure, monomer.

The protein localises to the nucleus. The protein resides in the cytoplasm. The catalysed reaction is uroporphyrinogen III + 4 H(+) = coproporphyrinogen III + 4 CO2. It carries out the reaction uroporphyrinogen I + 4 H(+) = coproporphyrinogen I + 4 CO2. It functions in the pathway porphyrin-containing compound metabolism; protoporphyrin-IX biosynthesis; coproporphyrinogen-III from 5-aminolevulinate: step 4/4. Catalyzes the sequential decarboxylation of four acetate groups of uroporphyrinogen-III (octacarboxyporphyrin) to yield coproporphyrinogen-III (tetracarboxyporphyrin) with the formation of intermediate hepta-, hexa- and penta-carboxylate porphyrinogens in the heme biosynthesis pathway. Acts on a number of porphyrinogens, but only coproporphyrinogen III can ultimately be converted to heme. The polypeptide is Uroporphyrinogen decarboxylase (hem12) (Schizosaccharomyces pombe (strain 972 / ATCC 24843) (Fission yeast)).